We begin with the raw amino-acid sequence, 159 residues long: UPF0699 transmembrane protein YdbS (159 aa).

2 consecutive transmembrane segments (helical) span residues I22–F42 and W47–I67.

The protein belongs to the UPF0699 family.

Its subcellular location is the cell membrane. The protein is UPF0699 transmembrane protein YdbS (ydbS) of Bacillus subtilis (strain 168).